The primary structure comprises 420 residues: MMEVNSTCLDCRTPGTIRTEQDAQDSASQGLTSALAVVLIFTIVVDVLGNILVILSVLRNKKLQNAGNLFVVSLSIADLVVAVYPYPVILIAIFQNGWTLGNIHCQISGFLMGLSVIGSVFNITAIAINRYCYICHSLRYDKLYNQRSTWCYLGLTWILTIIAIVPNFFVGSLQYDPRIFSCTFAQTVSSSYTITVVVVHFIVPLSVVTFCYLRIWVLVIQVKHRVRQDFKQKLTQTDLRNFLTMFVVFVLFAVCWAPLNFIGLAVAINPFHVAPKIPEWLFVLSYFMAYFNSCLNAVIYGVLNQNFRKEYKRILMSLLTPRLLFLDTSRGGTEGLKSKPSPAVTNNNQADMLGEARSLWLSRRNGAKMVIIIRPRKAQIAIIHQIFWPQSSWATCRQDTKITGEEDGCRELCKDGISQR.

The Extracellular segment spans residues 1 to 34 (MMEVNSTCLDCRTPGTIRTEQDAQDSASQGLTSA). Residue Asn-5 is glycosylated (N-linked (GlcNAc...) asparagine). A helical membrane pass occupies residues 35 to 55 (LAVVLIFTIVVDVLGNILVIL). Over 56–73 (SVLRNKKLQNAGNLFVVS) the chain is Cytoplasmic. Residues 74–94 (LSIADLVVAVYPYPVILIAIF) form a helical membrane-spanning segment. At 95 to 106 (QNGWTLGNIHCQ) the chain is on the extracellular side. A disulfide bridge connects residues Cys-105 and Cys-182. A helical transmembrane segment spans residues 107–127 (ISGFLMGLSVIGSVFNITAIA). Residues 128–152 (INRYCYICHSLRYDKLYNQRSTWCY) are Cytoplasmic-facing. A helical transmembrane segment spans residues 153–173 (LGLTWILTIIAIVPNFFVGSL). Residues 174-192 (QYDPRIFSCTFAQTVSSSY) lie on the Extracellular side of the membrane. A helical membrane pass occupies residues 193 to 213 (TITVVVVHFIVPLSVVTFCYL). Topologically, residues 214–245 (RIWVLVIQVKHRVRQDFKQKLTQTDLRNFLTM) are cytoplasmic. A helical membrane pass occupies residues 246 to 266 (FVVFVLFAVCWAPLNFIGLAV). Over 267–279 (AINPFHVAPKIPE) the chain is Extracellular. The chain crosses the membrane as a helical span at residues 280 to 303 (WLFVLSYFMAYFNSCLNAVIYGVL). The Cytoplasmic portion of the chain corresponds to 304–420 (NQNFRKEYKR…ELCKDGISQR (117 aa)).

This sequence belongs to the G-protein coupled receptor 1 family. In terms of tissue distribution, moderately expressed in dermal melanophores.

The protein resides in the cell membrane. Its function is as follows. High affinity receptor for melatonin. Likely to mediate the potent effects of melatonin on pigment aggregation in melanophores. The activity of this receptor is mediated by pertussis toxin sensitive G proteins that inhibit adenylate cyclase activity. The chain is Melatonin receptor type 1C (mtnr1c) from Xenopus laevis (African clawed frog).